Consider the following 108-residue polypeptide: Large ribosomal subunit protein bL31B (108 aa).

A disordered region spans residues 85-108 (PKPETSVEEVLPKGKKKAPAKKKK). Over residues 97 to 108 (KGKKKAPAKKKK) the composition is skewed to basic residues.

It belongs to the bacterial ribosomal protein bL31 family. Type B subfamily. Part of the 50S ribosomal subunit.

This is Large ribosomal subunit protein bL31B from Chlamydia muridarum (strain MoPn / Nigg).